The chain runs to 113 residues: Protein ORF3 (113 aa).

2 hydrophobic regions span residues 1-21 (MGSPCALGLFCCCSSCFCLCC) and 32-52 (AVVGGATAVPAVVSGVTGLIL). Residues 27–67 (ASRLAAVVGGATAVPAVVSGVTGLILSPSPSPIFIQPTPSL) are interaction with host HPX. Residues 47–71 (VTGLILSPSPSPIFIQPTPSLPMSF) form an interaction with the capsid protein region. Serine 70 carries the phosphoserine; by host modification. Residues 71–113 (FHNPGLELALDSRPAPLAPLGVTSPSAPPLPPVVDLPQLGLRR) are homodimerization, and interaction with host AMBP/bikunin. Residues 89-113 (PLGVTSPSAPPLPPVVDLPQLGLRR) form a disordered region. An interaction with host SRC, HCK, FYN, PIK3R3 and GRB2 region spans residues 94-103 (SPSAPPLPPV). The PTAP/PSAP motif motif lies at 95–98 (PSAP).

Belongs to the hepevirus ORF3 protein family. As to quaternary structure, forms homooligomers. Interacts with host SRC, HCK, FYN, PIK3R3 and GRB2 (via SH3 domain); binding does not activate the kinases. Interacts with host AMBP/bikunin and AMBP/alpha-1-microglobulin peptides. Interacts with host HPX/hemopexin. Interacts (when phosphorylated) with capsid protein ORF2. Interacts with host TSG101; this interaction plays a role in viral release from the host cell. Interacts with host SIRPA; this interaction down-regulates the phosphorylation of host IRF3. Post-translationally, palmitoylated in the N-terminus.

It localises to the host endoplasmic reticulum membrane. Its subcellular location is the host cytoplasm. It is found in the host cytoskeleton. The protein resides in the virion. The protein localises to the host cell membrane. In terms of biological role, small multifunctional phosphoprotein involved in virion morphogenesis, egress and counteracting host innate immunity. Plays critical roles in the final steps of viral release by interacting with host TSG101, a member of the vacuolar protein-sorting pathway and using other cellular host proteins involved in vesicle formation pathway. Also acts as a viroporin and forms ion conductive pores allowing viral particle release. Impairs the generation of type I interferon by down-regulating host TLR3 and TLR7 as well as their downstream signaling pathways. Down-regulates the phosphorylation of host IRF3 via the interaction with host SIRP-alpha, thereby inhibiting IFN-I expression. Interacts with host microtubules. This chain is Protein ORF3, found in Bandicota bengalensis (lesser bandicoot rat).